Consider the following 232-residue polypeptide: Phosphatidylserine decarboxylase proenzyme (232 aa).

Residue serine 201 is the Schiff-base intermediate with substrate; via pyruvic acid of the active site. At serine 201 the chain carries Pyruvic acid (Ser); by autocatalysis.

It belongs to the phosphatidylserine decarboxylase family. PSD-A subfamily. Heterodimer of a large membrane-associated beta subunit and a small pyruvoyl-containing alpha subunit. It depends on pyruvate as a cofactor. In terms of processing, is synthesized initially as an inactive proenzyme. Formation of the active enzyme involves a self-maturation process in which the active site pyruvoyl group is generated from an internal serine residue via an autocatalytic post-translational modification. Two non-identical subunits are generated from the proenzyme in this reaction, and the pyruvate is formed at the N-terminus of the alpha chain, which is derived from the carboxyl end of the proenzyme. The post-translation cleavage follows an unusual pathway, termed non-hydrolytic serinolysis, in which the side chain hydroxyl group of the serine supplies its oxygen atom to form the C-terminus of the beta chain, while the remainder of the serine residue undergoes an oxidative deamination to produce ammonia and the pyruvoyl prosthetic group on the alpha chain.

The protein resides in the cell membrane. It carries out the reaction a 1,2-diacyl-sn-glycero-3-phospho-L-serine + H(+) = a 1,2-diacyl-sn-glycero-3-phosphoethanolamine + CO2. The protein operates within phospholipid metabolism; phosphatidylethanolamine biosynthesis; phosphatidylethanolamine from CDP-diacylglycerol: step 2/2. Catalyzes the formation of phosphatidylethanolamine (PtdEtn) from phosphatidylserine (PtdSer). The polypeptide is Phosphatidylserine decarboxylase proenzyme (Mycolicibacterium gilvum (strain PYR-GCK) (Mycobacterium gilvum (strain PYR-GCK))).